We begin with the raw amino-acid sequence, 257 residues long: Imidazole glycerol phosphate synthase subunit HisF (257 aa).

Catalysis depends on residues D12 and D131.

This sequence belongs to the HisA/HisF family. As to quaternary structure, heterodimer of HisH and HisF.

The protein resides in the cytoplasm. The enzyme catalyses 5-[(5-phospho-1-deoxy-D-ribulos-1-ylimino)methylamino]-1-(5-phospho-beta-D-ribosyl)imidazole-4-carboxamide + L-glutamine = D-erythro-1-(imidazol-4-yl)glycerol 3-phosphate + 5-amino-1-(5-phospho-beta-D-ribosyl)imidazole-4-carboxamide + L-glutamate + H(+). The protein operates within amino-acid biosynthesis; L-histidine biosynthesis; L-histidine from 5-phospho-alpha-D-ribose 1-diphosphate: step 5/9. IGPS catalyzes the conversion of PRFAR and glutamine to IGP, AICAR and glutamate. The HisF subunit catalyzes the cyclization activity that produces IGP and AICAR from PRFAR using the ammonia provided by the HisH subunit. This is Imidazole glycerol phosphate synthase subunit HisF from Marinobacter nauticus (strain ATCC 700491 / DSM 11845 / VT8) (Marinobacter aquaeolei).